Consider the following 120-residue polypeptide: Chaperonin GroEL (120 aa).

Position 23 to 27 (23 to 27) interacts with ATP; it reads DGTTT.

Belongs to the chaperonin (HSP60) family. In terms of assembly, forms a cylinder of 14 subunits composed of two heptameric rings stacked back-to-back. Interacts with the co-chaperonin GroES.

The protein resides in the cytoplasm. The enzyme catalyses ATP + H2O + a folded polypeptide = ADP + phosphate + an unfolded polypeptide.. Its function is as follows. Together with its co-chaperonin GroES, plays an essential role in assisting protein folding. The GroEL-GroES system forms a nano-cage that allows encapsulation of the non-native substrate proteins and provides a physical environment optimized to promote and accelerate protein folding. This is Chaperonin GroEL from Mycolicibacterium fallax (Mycobacterium fallax).